The sequence spans 315 residues: Ribosomal RNA small subunit methyltransferase H (315 aa).

S-adenosyl-L-methionine is bound by residues 35 to 37 (GGH), Asp55, Phe79, Asp101, and Gln108.

Belongs to the methyltransferase superfamily. RsmH family.

It localises to the cytoplasm. It catalyses the reaction cytidine(1402) in 16S rRNA + S-adenosyl-L-methionine = N(4)-methylcytidine(1402) in 16S rRNA + S-adenosyl-L-homocysteine + H(+). Specifically methylates the N4 position of cytidine in position 1402 (C1402) of 16S rRNA. The chain is Ribosomal RNA small subunit methyltransferase H from Sodalis glossinidius (strain morsitans).